The primary structure comprises 510 residues: ATP synthase subunit alpha (510 aa).

169–176 contacts ATP; the sequence is GDRQTGKT.

It belongs to the ATPase alpha/beta chains family. In terms of assembly, F-type ATPases have 2 components, CF(1) - the catalytic core - and CF(0) - the membrane proton channel. CF(1) has five subunits: alpha(3), beta(3), gamma(1), delta(1), epsilon(1). CF(0) has three main subunits: a(1), b(2) and c(9-12). The alpha and beta chains form an alternating ring which encloses part of the gamma chain. CF(1) is attached to CF(0) by a central stalk formed by the gamma and epsilon chains, while a peripheral stalk is formed by the delta and b chains.

It localises to the cell membrane. The enzyme catalyses ATP + H2O + 4 H(+)(in) = ADP + phosphate + 5 H(+)(out). Functionally, produces ATP from ADP in the presence of a proton gradient across the membrane. The alpha chain is a regulatory subunit. This chain is ATP synthase subunit alpha, found in Buchnera aphidicola subsp. Schizaphis graminum (strain Sg).